Here is a 142-residue protein sequence, read N- to C-terminus: COA8 family protein Y39B6A.34, mitochondrial (142 aa).

Belongs to the COA8 family.

The protein localises to the mitochondrion inner membrane. May be required for cytochrome c complex (COX) assembly and function, COX being the terminal component of the mitochondrial respiratory chain. The sequence is that of COA8 family protein Y39B6A.34, mitochondrial from Caenorhabditis elegans.